We begin with the raw amino-acid sequence, 372 residues long: 2,7-anhydro-N-acetylneuraminate hydratase (372 aa).

Tyr-11, Phe-12, Asp-33, Asn-36, Thr-68, Asn-70, His-73, Glu-90, Lys-91, and Trp-160 together coordinate NAD(+).

This sequence belongs to the Gfo/Idh/MocA family. Homodimer. NAD(+) serves as cofactor.

The catalysed reaction is N-acetyl-2,7-anhydro-alpha-neuraminate + H2O = N-acetyl-alpha-neuraminate. It catalyses the reaction 2-deoxy-2,3-dehydro-N-acetylneuraminate + H2O = N-acetyl-alpha-neuraminate. Its activity is regulated as follows. All conversions require NAD(+) as a cofactor, which is regenerated in the reaction. The presence of EGTA and several divalent cations does not affect the activity. Hydratase involved in the degradation of sialic acids. Catalyzes the reversible conversion of the dehydrated form of N-acetylneuraminate (Neu5Ac), 2,7-anhydro-N-acetylneuraminate (2,7-AN), to Neu5Ac. Also catalyzes the irreversible conversion of 2-deoxy-2,3-didehydro-N-acetylneuraminate (2,3-EN) to Neu5Ac. The reaction mechanism involves keto intermediates and the transient formation of NADH. The protein is 2,7-anhydro-N-acetylneuraminate hydratase of Escherichia coli (strain K12).